The sequence spans 88 residues: Sigma-conotoxin GVIIIA (88 aa).

A signal peptide spans 1–20 (MMSKMGAMFVLLLLFTLASS). The propeptide occupies 21 to 46 (LQEGDVQARKTRLKSDFYRALARDDR). Pro-55 is subject to 4-hydroxyproline. Trp-80 is subject to 6'-bromotryptophan. At Ser-87 the chain carries Serine amide.

This sequence belongs to the conotoxin S superfamily. In terms of processing, contains 5 disulfide bonds. In terms of tissue distribution, expressed by the venom duct.

The protein localises to the secreted. Functionally, sigma-conotoxins bind and inhibit serotonin-gated ion channels. This peptide selectively and reversibly inhibits 5-hydroxytryptamine 3 receptor (HTR3A) through competitive antagonism (IC(50)=53-86.8 nM). The polypeptide is Sigma-conotoxin GVIIIA (Conus geographus (Geography cone)).